Here is a 277-residue protein sequence, read N- to C-terminus: Small ribosomal subunit protein uS3 (277 aa).

Residues 43–111 form the KH type-2 domain; that stretch reads IRELMSKGMD…QIQLNILEVK (69 aa). Residues 217 to 277 form a disordered region; that stretch reads AAQQAAAPSS…AEANNAEGGK (61 aa). A compositionally biased stretch (basic and acidic residues) spans 245 to 258; the sequence is NDRNDRGGRRERDS. Positions 259–277 are enriched in low complexity; sequence AAAPQQNSAAEANNAEGGK.

The protein belongs to the universal ribosomal protein uS3 family. As to quaternary structure, part of the 30S ribosomal subunit. Forms a tight complex with proteins S10 and S14.

Functionally, binds the lower part of the 30S subunit head. Binds mRNA in the 70S ribosome, positioning it for translation. The chain is Small ribosomal subunit protein uS3 from Kocuria rhizophila (strain ATCC 9341 / DSM 348 / NBRC 103217 / DC2201).